Consider the following 579-residue polypeptide: 2-isopropylmalate synthase (579 aa).

One can recognise a Pyruvate carboxyltransferase domain in the interval 33–308 (PRWLSTDLRD…DPGIDFSDIN (276 aa)). The Mg(2+) site is built by Asp-42, His-247, His-249, and Asn-283. A regulatory domain region spans residues 450–579 (SSDLPVPLAS…IVAPLVAAGR (130 aa)).

This sequence belongs to the alpha-IPM synthase/homocitrate synthase family. LeuA type 2 subfamily. As to quaternary structure, homodimer. The cofactor is Mg(2+).

Its subcellular location is the cytoplasm. It carries out the reaction 3-methyl-2-oxobutanoate + acetyl-CoA + H2O = (2S)-2-isopropylmalate + CoA + H(+). Its pathway is amino-acid biosynthesis; L-leucine biosynthesis; L-leucine from 3-methyl-2-oxobutanoate: step 1/4. In terms of biological role, catalyzes the condensation of the acetyl group of acetyl-CoA with 3-methyl-2-oxobutanoate (2-ketoisovalerate) to form 3-carboxy-3-hydroxy-4-methylpentanoate (2-isopropylmalate). The polypeptide is 2-isopropylmalate synthase (Streptosporangium roseum (strain ATCC 12428 / DSM 43021 / JCM 3005 / KCTC 9067 / NCIMB 10171 / NRRL 2505 / NI 9100)).